The chain runs to 236 residues: Probable transcriptional regulatory protein Suden_1389 (236 aa).

It belongs to the TACO1 family.

Its subcellular location is the cytoplasm. The polypeptide is Probable transcriptional regulatory protein Suden_1389 (Sulfurimonas denitrificans (strain ATCC 33889 / DSM 1251) (Thiomicrospira denitrificans (strain ATCC 33889 / DSM 1251))).